The sequence spans 383 residues: MKKTKFFLLGLAALAMTACNKDNEAEPVTEGNATISVVLKTSNSNRAFGVGDDESKVAKLTVMVYNGEQQEAIKSAENATKVEDIKCSAGQRTLVVMANTGAMELVGKTLAEVKALTTELTAENQEAAGLIMTAEPKTIVLKAGKNYIGYSGTGEGNHIENDPLKIKRVHARMAFTEIKVQMSAAYDNIYTFVPEKIYGLIAKKQSNLFGATLVNADANYLTGSLTTFNGAYTPANYANVPWLSRDYIAPTADAPQGFYVLENDYSANSGTIHPTILCVYGKLQKNGADLTGTDLAAAQAANWVDGQGKTYYPVLVNFNSNNYTYDNGYTPKNKIERNHKYDIKLTITGPGTNNPENPITESAHLNVQCTVAEWVLVGQNATW.

Positions Met1–Ala18 are cleaved as a signal peptide. The N-palmitoyl cysteine moiety is linked to residue Cys19. A lipid anchor (S-diacylglycerol cysteine) is attached at Cys19. Positions Cys19–Arg46 are excised as a propeptide. Residues Trp374–Trp383 form an important for oligomerization and fimbrium assembly region.

The protein belongs to the bacteroidetes fimbrillin superfamily. FimA/Mfa1 family. In terms of assembly, fimbriae are composed of a major, structural subunit (FimA) and the minor components FimC, FimD and FimE. Head-to-tail oligomerization of FimA molecules mediates assembly of the fimbrium stalk, while the minor components probably form the fimbrium tip. Linear, head-to-tail oligomerization of FimA is mediated by a conformation change, facilitating the insertion of a C-terminal beta-strand into a groove in the N-terminal domain of the following subunit. Synthesized as palmitoylated lipoprotein precursor. Efficient export to the outer membrane and integration into fimbriae requires lipidation and subsequent proteolytic removal of the lipidated propeptide.

The protein resides in the fimbrium. It localises to the cell outer membrane. Its function is as follows. Structural subunit of the major fimbriae. These long, filamentous pili are attached to the cell surface; they mediate biofilm formation, adhesion onto host cells and onto other bacteria that are part of the oral microbiome. They play an important role in the invasion of periodontal tissues. Fimbriae and their constituents are major virulence factors. FimA proteins from different strains have highly divergent sequences, and this has been used for classification. The sequence-based classification correlates with pathogenicity. The protein is Major fimbrium subunit FimA type Ib (fimA) of Porphyromonas gingivalis (Bacteroides gingivalis).